The primary structure comprises 159 residues: Peptide deformylase (159 aa).

Cys88 and His130 together coordinate Fe cation. Glu131 is a catalytic residue. His134 contacts Fe cation.

Belongs to the polypeptide deformylase family. Fe(2+) is required as a cofactor.

It carries out the reaction N-terminal N-formyl-L-methionyl-[peptide] + H2O = N-terminal L-methionyl-[peptide] + formate. In terms of biological role, removes the formyl group from the N-terminal Met of newly synthesized proteins. Requires at least a dipeptide for an efficient rate of reaction. N-terminal L-methionine is a prerequisite for activity but the enzyme has broad specificity at other positions. The sequence is that of Peptide deformylase from Thermoanaerobacter pseudethanolicus (strain ATCC 33223 / 39E) (Clostridium thermohydrosulfuricum).